Here is a 56-residue protein sequence, read N- to C-terminus: Large ribosomal subunit protein bL32 (56 aa).

Positions 1–36 are disordered; it reads MAVQQNKKSRSKRGMRRSHDALSTAQLSVDATSGEV. A compositionally biased stretch (basic residues) spans 7-16; that stretch reads KKSRSKRGMR. Positions 21-31 are enriched in polar residues; that stretch reads ALSTAQLSVDA.

This sequence belongs to the bacterial ribosomal protein bL32 family.

This chain is Large ribosomal subunit protein bL32, found in Shewanella oneidensis (strain ATCC 700550 / JCM 31522 / CIP 106686 / LMG 19005 / NCIMB 14063 / MR-1).